The chain runs to 437 residues: Trigger factor (437 aa).

The PPIase FKBP-type domain maps to 164–249 (GDFAKFDFEG…LHEIQCKKIG (86 aa)).

It belongs to the FKBP-type PPIase family. Tig subfamily.

Its subcellular location is the cytoplasm. It carries out the reaction [protein]-peptidylproline (omega=180) = [protein]-peptidylproline (omega=0). Its function is as follows. Involved in protein export. Acts as a chaperone by maintaining the newly synthesized protein in an open conformation. Functions as a peptidyl-prolyl cis-trans isomerase. This is Trigger factor from Campylobacter hominis (strain ATCC BAA-381 / DSM 21671 / CCUG 45161 / LMG 19568 / NCTC 13146 / CH001A).